A 134-amino-acid chain; its full sequence is Bradykinin-related peptides (134 aa).

A signal peptide spans 1–22 (MAFLKKSLFLVLFLGVVSLSFC). 3 consecutive propeptides follow at residues 23-44 (EEEK…ESLG), 71-82 (RSISGLTPIRLS), and 99-121 (ISEA…PLRG). The segment covering 24–33 (EEKREEHEEE) has biased composition (basic and acidic residues). The tract at residues 24 to 71 (EEKREEHEEEKRDEEDAESLGKRYGGLSPLRISKRVPPGFTPFRSPAR) is disordered. A 4-hydroxyproline; partial; in form [Hyp3]-bradykinin and [Hyp3]-bradykinin-Val,Asp modification is found at proline 126.

This sequence belongs to the frog skin active peptide (FSAP) family. Bradykinin-related peptide subfamily. As to expression, expressed by the skin glands. Expression levels in inguinal glands are much higher than in granular glands.

It is found in the secreted. In terms of biological role, may produce in vitro relaxation of rat arterial smooth muscle and constriction of intestinal smooth muscle. May target bradykinin receptors (BDKRB). This Physalaemus nattereri (Cuyaba dwarf frog) protein is Bradykinin-related peptides.